The chain runs to 346 residues: Holliday junction branch migration complex subunit RuvB (346 aa).

The tract at residues 1–183 is large ATPase domain (RuvB-L); sequence MTEQRIIASS…FGIVQRLEFY (183 aa). ATP contacts are provided by residues isoleucine 22, arginine 23, glycine 64, lysine 67, threonine 68, threonine 69, 130–132, arginine 173, tyrosine 183, and arginine 220; that span reads EDF. Threonine 68 contacts Mg(2+). The small ATPAse domain (RuvB-S) stretch occupies residues 184-254; that stretch reads SPQELTRIVI…VAQAAMQMLK (71 aa). The segment at 257-346 is head domain (RuvB-H); sequence PEGFDELDRR…PGIGEPGDLF (90 aa). DNA contacts are provided by arginine 293, arginine 312, and arginine 317.

The protein belongs to the RuvB family. As to quaternary structure, homohexamer. Forms an RuvA(8)-RuvB(12)-Holliday junction (HJ) complex. HJ DNA is sandwiched between 2 RuvA tetramers; dsDNA enters through RuvA and exits via RuvB. An RuvB hexamer assembles on each DNA strand where it exits the tetramer. Each RuvB hexamer is contacted by two RuvA subunits (via domain III) on 2 adjacent RuvB subunits; this complex drives branch migration. In the full resolvosome a probable DNA-RuvA(4)-RuvB(12)-RuvC(2) complex forms which resolves the HJ.

It localises to the cytoplasm. The catalysed reaction is ATP + H2O = ADP + phosphate + H(+). In terms of biological role, the RuvA-RuvB-RuvC complex processes Holliday junction (HJ) DNA during genetic recombination and DNA repair, while the RuvA-RuvB complex plays an important role in the rescue of blocked DNA replication forks via replication fork reversal (RFR). RuvA specifically binds to HJ cruciform DNA, conferring on it an open structure. The RuvB hexamer acts as an ATP-dependent pump, pulling dsDNA into and through the RuvAB complex. RuvB forms 2 homohexamers on either side of HJ DNA bound by 1 or 2 RuvA tetramers; 4 subunits per hexamer contact DNA at a time. Coordinated motions by a converter formed by DNA-disengaged RuvB subunits stimulates ATP hydrolysis and nucleotide exchange. Immobilization of the converter enables RuvB to convert the ATP-contained energy into a lever motion, pulling 2 nucleotides of DNA out of the RuvA tetramer per ATP hydrolyzed, thus driving DNA branch migration. The RuvB motors rotate together with the DNA substrate, which together with the progressing nucleotide cycle form the mechanistic basis for DNA recombination by continuous HJ branch migration. Branch migration allows RuvC to scan DNA until it finds its consensus sequence, where it cleaves and resolves cruciform DNA. This Xanthomonas axonopodis pv. citri (strain 306) protein is Holliday junction branch migration complex subunit RuvB.